The sequence spans 427 residues: Phosphatidate cytidylyltransferase, mitochondrial (427 aa).

Residues 94–106 (YNRNGDGSTSTEN) are compositionally biased toward polar residues. The tract at residues 94-113 (YNRNGDGSTSTENPSKKEEQ) is disordered.

Belongs to the TAM41 family. It depends on Mg(2+) as a cofactor.

The protein localises to the mitochondrion inner membrane. The catalysed reaction is a 1,2-diacyl-sn-glycero-3-phosphate + CTP + H(+) = a CDP-1,2-diacyl-sn-glycerol + diphosphate. It functions in the pathway phospholipid metabolism; CDP-diacylglycerol biosynthesis; CDP-diacylglycerol from sn-glycerol 3-phosphate: step 3/3. Catalyzes the formation of CDP-diacylglycerol (CDP-DAG) from phosphatidic acid (PA) in the mitochondrial inner membrane. Required for the biosynthesis of the dimeric phospholipid cardiolipin, which stabilizes supercomplexes of the mitochondrial respiratory chain in the mitochondrial inner membrane. The protein is Phosphatidate cytidylyltransferase, mitochondrial of Dictyostelium discoideum (Social amoeba).